A 416-amino-acid chain; its full sequence is Phosphoglycerate kinase (416 aa).

The (2R)-3-phosphoglycerate site is built by V23, D24, F25, N26, Q38, R39, S62, H63, G65, R66, L121, R122, H168, and R169. An ADP-binding site is contributed by G212. Position 212 (G212) interacts with CDP. 2 residues coordinate AMP: A213 and K214. Residue A213 coordinates ATP. A213 is a binding site for Mg(2+). A216 and D217 together coordinate Mg(2+). D217 provides a ligand contact to CDP. K218 provides a ligand contact to AMP. Residue K218 coordinates ATP. An ADP-binding site is contributed by G236. G236 is a binding site for CDP. AMP is bound by residues G237 and G311. Residues G237 and G311 each coordinate ATP. G336 and F341 together coordinate CDP. ADP is bound at residue F341. E342 is an AMP binding site. E342, D373, and T374 together coordinate ATP. D373 serves as a coordination point for Mg(2+).

It belongs to the phosphoglycerate kinase family. Monomer. It depends on Mg(2+) as a cofactor.

It localises to the cytoplasm. It is found in the mitochondrion. The catalysed reaction is (2R)-3-phosphoglycerate + ATP = (2R)-3-phospho-glyceroyl phosphate + ADP. It functions in the pathway carbohydrate degradation; glycolysis; pyruvate from D-glyceraldehyde 3-phosphate: step 2/5. In terms of biological role, catalyzes one of the two ATP producing reactions in the glycolytic pathway via the reversible conversion of 1,3-diphosphoglycerate to 3-phosphoglycerate. Both L- and D- forms of purine and pyrimidine nucleotides can be used as substrates, but the activity is much lower on pyrimidines. Negatively regulates the biosynthesis of acetyl-CoA from pyruvate in the mitochondrion. In Kluyveromyces lactis (strain ATCC 8585 / CBS 2359 / DSM 70799 / NBRC 1267 / NRRL Y-1140 / WM37) (Yeast), this protein is Phosphoglycerate kinase (PGK).